A 354-amino-acid chain; its full sequence is Cytoplasmic tRNA 2-thiolation protein 1 (354 aa).

It belongs to the TtcA family. CTU1/NCS6/ATPBD3 subfamily.

It localises to the cytoplasm. It participates in tRNA modification; 5-methoxycarbonylmethyl-2-thiouridine-tRNA biosynthesis. Its function is as follows. Plays a central role in 2-thiolation of mcm(5)S(2)U at tRNA wobble positions of tRNA(Lys), tRNA(Glu) and tRNA(Gln). Directly binds tRNAs and probably acts by catalyzing adenylation of tRNAs, an intermediate required for 2-thiolation. It is unclear whether it acts as a sulfurtransferase that transfers sulfur from thiocarboxylated URM1 onto the uridine of tRNAs at wobble position. Prior mcm(5) tRNA modification by the elongator complex is required for 2-thiolation. May also be involved in protein urmylation. The chain is Cytoplasmic tRNA 2-thiolation protein 1 from Laccaria bicolor (strain S238N-H82 / ATCC MYA-4686) (Bicoloured deceiver).